The chain runs to 418 residues: Gamma-glutamyl phosphate reductase (418 aa).

This sequence belongs to the gamma-glutamyl phosphate reductase family.

It is found in the cytoplasm. It catalyses the reaction L-glutamate 5-semialdehyde + phosphate + NADP(+) = L-glutamyl 5-phosphate + NADPH + H(+). Its pathway is amino-acid biosynthesis; L-proline biosynthesis; L-glutamate 5-semialdehyde from L-glutamate: step 2/2. Catalyzes the NADPH-dependent reduction of L-glutamate 5-phosphate into L-glutamate 5-semialdehyde and phosphate. The product spontaneously undergoes cyclization to form 1-pyrroline-5-carboxylate. The chain is Gamma-glutamyl phosphate reductase from Dechloromonas aromatica (strain RCB).